The following is a 635-amino-acid chain: MARIRLLDERTANQIAAGEVVERPASVVKELVENALDAQAKRIVVEVSGGGRELVRVTDDGIGMVPEDARLALQRHATSKIRTAEDLNAITTLGFRGEALPSIAAVSQFELITRPHDQLAGYRILAEGGQIVAEGEHGCPAGTRVTVRDLFFNVPARLKYLKTNATELAQIGDILTRLALANPEVAFRFQSGQAQVFATPGTGDLTAAVAALLGREMAKELLPVDYRNDAARVHGFVGRPTIARAGRSHQYFFVNRRAVRTIAARYALEEAYAHLLPNGRYPVCILFIEVEPHEVDVNVHPTKAEVRFQRDREVRAAVYQAARHALGAALLIPGTEVTADGEVRVPDRAEEKAALQRGWVPPGAGRPGEGGGRAAPPPWRVSAGGPGGQTTAREPVQAYLPAGGLQAALAQRAAEEAAAAVPAVDLAEATLVPRSAEPGELIRALRPLGQVHRSYIACDGPEGLYLIDQHAAHERIFFERLYAAAQEQATAVQRLLFPLTLDLTPAQMAIWQENAAIFAESGFEAEPFGGNTLLIHGVPAGLGTDHVARLVCDFLDRLQEDQVAPGTPVTDRRRRVLAAMAACKAAIKARDPLQPEDIAALLSDLAACASPETCPHGRPTVICVSISELEKRFKR.

The segment at 352-380 (KAALQRGWVPPGAGRPGEGGGRAAPPPWR) is disordered.

It belongs to the DNA mismatch repair MutL/HexB family.

Its function is as follows. This protein is involved in the repair of mismatches in DNA. It is required for dam-dependent methyl-directed DNA mismatch repair. May act as a 'molecular matchmaker', a protein that promotes the formation of a stable complex between two or more DNA-binding proteins in an ATP-dependent manner without itself being part of a final effector complex. In Symbiobacterium thermophilum (strain DSM 24528 / JCM 14929 / IAM 14863 / T), this protein is DNA mismatch repair protein MutL.